Here is a 393-residue protein sequence, read N- to C-terminus: Dual-specificity RNA methyltransferase RlmN (393 aa).

Glutamate 114 serves as the catalytic Proton acceptor. The region spanning glutamate 120–aspartate 359 is the Radical SAM core domain. Residues cysteine 127 and cysteine 364 are joined by a disulfide bond. Positions 134, 138, and 141 each coordinate [4Fe-4S] cluster. Residues glycine 188–glutamate 189, serine 220, serine 242–histidine 244, and asparagine 321 contribute to the S-adenosyl-L-methionine site. Residue cysteine 364 is the S-methylcysteine intermediate of the active site.

It belongs to the radical SAM superfamily. RlmN family. [4Fe-4S] cluster is required as a cofactor.

It localises to the cytoplasm. It carries out the reaction adenosine(2503) in 23S rRNA + 2 reduced [2Fe-2S]-[ferredoxin] + 2 S-adenosyl-L-methionine = 2-methyladenosine(2503) in 23S rRNA + 5'-deoxyadenosine + L-methionine + 2 oxidized [2Fe-2S]-[ferredoxin] + S-adenosyl-L-homocysteine. It catalyses the reaction adenosine(37) in tRNA + 2 reduced [2Fe-2S]-[ferredoxin] + 2 S-adenosyl-L-methionine = 2-methyladenosine(37) in tRNA + 5'-deoxyadenosine + L-methionine + 2 oxidized [2Fe-2S]-[ferredoxin] + S-adenosyl-L-homocysteine. Its function is as follows. Specifically methylates position 2 of adenine 2503 in 23S rRNA and position 2 of adenine 37 in tRNAs. m2A2503 modification seems to play a crucial role in the proofreading step occurring at the peptidyl transferase center and thus would serve to optimize ribosomal fidelity. This Actinobacillus pleuropneumoniae serotype 3 (strain JL03) protein is Dual-specificity RNA methyltransferase RlmN.